The sequence spans 328 residues: Malate dehydrogenase (328 aa).

11–17 (GAAGQIG) contacts NAD(+). Substrate-binding residues include Arg-94 and Arg-100. NAD(+) contacts are provided by residues Asn-107, Gln-114, and 131-133 (VGN). The substrate site is built by Asn-133 and Arg-164. The active-site Proton acceptor is the His-189.

Belongs to the LDH/MDH superfamily. MDH type 2 family.

The enzyme catalyses (S)-malate + NAD(+) = oxaloacetate + NADH + H(+). In terms of biological role, catalyzes the reversible oxidation of malate to oxaloacetate. The chain is Malate dehydrogenase from Acinetobacter baylyi (strain ATCC 33305 / BD413 / ADP1).